We begin with the raw amino-acid sequence, 168 residues long: Ribosome maturation factor RimP (168 aa).

It belongs to the RimP family.

The protein resides in the cytoplasm. Required for maturation of 30S ribosomal subunits. The chain is Ribosome maturation factor RimP from Syntrophobacter fumaroxidans (strain DSM 10017 / MPOB).